The chain runs to 338 residues: Ketol-acid reductoisomerase (NADP(+)) (338 aa).

The KARI N-terminal Rossmann domain occupies 1–181 (MQVYYDKDCD…GGGRSGIIET (181 aa)). NADP(+) contacts are provided by residues 24–27 (YGSQ), arginine 47, serine 50, serine 52, and 82–85 (DEFQ). Histidine 107 is a catalytic residue. NADP(+) is bound at residue glycine 133. In terms of domain architecture, KARI C-terminal knotted spans 182 to 327 (TFKDETETDL…GKLRAMMPWI (146 aa)). Mg(2+) is bound by residues aspartate 190, glutamate 194, glutamate 226, and glutamate 230. Serine 251 provides a ligand contact to substrate.

The protein belongs to the ketol-acid reductoisomerase family. The cofactor is Mg(2+).

It carries out the reaction (2R)-2,3-dihydroxy-3-methylbutanoate + NADP(+) = (2S)-2-acetolactate + NADPH + H(+). The catalysed reaction is (2R,3R)-2,3-dihydroxy-3-methylpentanoate + NADP(+) = (S)-2-ethyl-2-hydroxy-3-oxobutanoate + NADPH + H(+). It participates in amino-acid biosynthesis; L-isoleucine biosynthesis; L-isoleucine from 2-oxobutanoate: step 2/4. Its pathway is amino-acid biosynthesis; L-valine biosynthesis; L-valine from pyruvate: step 2/4. Involved in the biosynthesis of branched-chain amino acids (BCAA). Catalyzes an alkyl-migration followed by a ketol-acid reduction of (S)-2-acetolactate (S2AL) to yield (R)-2,3-dihydroxy-isovalerate. In the isomerase reaction, S2AL is rearranged via a Mg-dependent methyl migration to produce 3-hydroxy-3-methyl-2-ketobutyrate (HMKB). In the reductase reaction, this 2-ketoacid undergoes a metal-dependent reduction by NADPH to yield (R)-2,3-dihydroxy-isovalerate. The sequence is that of Ketol-acid reductoisomerase (NADP(+)) from Saccharophagus degradans (strain 2-40 / ATCC 43961 / DSM 17024).